The primary structure comprises 54 residues: Large ribosomal subunit protein eL37 (54 aa).

Zn(2+) contacts are provided by cysteine 20, cysteine 23, cysteine 35, and cysteine 38. A C4-type zinc finger spans residues 20–38 (CRRCGHHTYNVRTKRCSHC).

It belongs to the eukaryotic ribosomal protein eL37 family. Zn(2+) serves as cofactor.

Binds to the 23S rRNA. This is Large ribosomal subunit protein eL37 (rpl37e) from Thermoplasma acidophilum (strain ATCC 25905 / DSM 1728 / JCM 9062 / NBRC 15155 / AMRC-C165).